The sequence spans 496 residues: 2,3-bisphosphoglycerate-independent phosphoglycerate mutase (496 aa).

D12 and S62 together coordinate Mn(2+). S62 (phosphoserine intermediate) is an active-site residue. Substrate contacts are provided by residues H121, 150–151 (RD), R181, R187, 252–255 (RNDR), and K317. Mn(2+) is bound by residues D384, H388, D425, H426, and H444.

Belongs to the BPG-independent phosphoglycerate mutase family. Monomer. It depends on Mn(2+) as a cofactor.

It carries out the reaction (2R)-2-phosphoglycerate = (2R)-3-phosphoglycerate. Its pathway is carbohydrate degradation; glycolysis; pyruvate from D-glyceraldehyde 3-phosphate: step 3/5. In terms of biological role, catalyzes the interconversion of 2-phosphoglycerate and 3-phosphoglycerate. The chain is 2,3-bisphosphoglycerate-independent phosphoglycerate mutase from Anaplasma phagocytophilum (strain HZ).